A 448-amino-acid chain; its full sequence is Methylenetetrahydrofolate--tRNA-(uracil-5-)-methyltransferase TrmFO (448 aa).

13-18 serves as a coordination point for FAD; the sequence is GAGLAG.

The protein belongs to the MnmG family. TrmFO subfamily. Requires FAD as cofactor.

The protein resides in the cytoplasm. It carries out the reaction uridine(54) in tRNA + (6R)-5,10-methylene-5,6,7,8-tetrahydrofolate + NADH + H(+) = 5-methyluridine(54) in tRNA + (6S)-5,6,7,8-tetrahydrofolate + NAD(+). The catalysed reaction is uridine(54) in tRNA + (6R)-5,10-methylene-5,6,7,8-tetrahydrofolate + NADPH + H(+) = 5-methyluridine(54) in tRNA + (6S)-5,6,7,8-tetrahydrofolate + NADP(+). In terms of biological role, catalyzes the folate-dependent formation of 5-methyl-uridine at position 54 (M-5-U54) in all tRNAs. The sequence is that of Methylenetetrahydrofolate--tRNA-(uracil-5-)-methyltransferase TrmFO from Streptococcus pyogenes serotype M3 (strain ATCC BAA-595 / MGAS315).